Reading from the N-terminus, the 105-residue chain is Heat shock protein HspQ (105 aa).

Residues 80–105 (AHPEQPSLDELAASIRHQLQAPHLRN) form a disordered region.

Belongs to the HspQ family.

It is found in the cytoplasm. Involved in the degradation of certain denaturated proteins, including DnaA, during heat shock stress. This chain is Heat shock protein HspQ, found in Yersinia pseudotuberculosis serotype O:1b (strain IP 31758).